The sequence spans 418 residues: Acyl-coenzyme A amino acid N-acyltransferase 2 (418 aa).

Residues Ser-234, Asp-327, and His-361 each act as charge relay system in the active site. The Microbody targeting signal signature appears at 416-418; it reads GKL.

The protein belongs to the C/M/P thioester hydrolase family.

Its subcellular location is the peroxisome. In terms of biological role, acyltransferase which efficiently conjugates very long-chain and long-chain fatty acids to taurine. Shows no conjugation activity in the presence of glycine. The sequence is that of Acyl-coenzyme A amino acid N-acyltransferase 2 from Rattus norvegicus (Rat).